The primary structure comprises 149 residues: Sperm surface protein Sp17 (149 aa).

Basic and acidic residues predominate over residues Cys83–Thr96. Positions Cys83–Ala114 are disordered. Acidic residues predominate over residues Glu103–Glu113. The IQ domain maps to Glu112 to Glu141.

In terms of assembly, homodimer. May interact with ROPN1. Testis- and sperm-specific.

It localises to the membrane. In terms of biological role, sperm surface zona pellucida binding protein. Helps to bind spermatozoa to the zona pellucida with high affinity. Might function in binding zona pellucida and carbohydrates. The protein is Sperm surface protein Sp17 (Spa17) of Mus musculus (Mouse).